The following is a 370-amino-acid chain: MASADSNTLPRAPGDGDGVVISVDAMGGDRGPATVVAGMAESAGKNPGIRFIVHGPQAELERLIARRGDLAGRCDIRDAAGVVTMDDKPSQVLRKGEGTSMWSTLESVRQGEATAAVSCGNTGALMALSMLRLRKLPGVNRPAIACLWPSRNPQGFNVMLDVGADIRADAQDLLTYALMGASYARNGFGLERPRVGLLNVGTEEHKGRPELKQAHELIPTTAQAANFDYVGFVEGGDLPSARVDVIVTDGFTGNVALKTGEGTAKLVGELLKEAFGKSVMSKFAALLAMGSLKRLQKRIDPRRINGGVFLGLNGTVVKSHGSADATGVSAAIKLAFRLAQSGFQDRLAARVAQSVAAAGQINGSKESEAS.

It belongs to the PlsX family. In terms of assembly, homodimer. Probably interacts with PlsY.

It is found in the cytoplasm. It carries out the reaction a fatty acyl-[ACP] + phosphate = an acyl phosphate + holo-[ACP]. Its pathway is lipid metabolism; phospholipid metabolism. Its function is as follows. Catalyzes the reversible formation of acyl-phosphate (acyl-PO(4)) from acyl-[acyl-carrier-protein] (acyl-ACP). This enzyme utilizes acyl-ACP as fatty acyl donor, but not acyl-CoA. This chain is Phosphate acyltransferase, found in Paracoccus denitrificans (strain Pd 1222).